Consider the following 314-residue polypeptide: Protoheme IX farnesyltransferase (314 aa).

8 helical membrane passes run 36-56 (IGIV…AISF), 65-85 (WGTF…GCIV), 114-134 (SVLT…MFTS), 135-155 (WYAT…YTIW), 179-199 (WAAI…IMFI), 237-257 (IIVY…TMGI), 259-279 (FAVI…TGLF), and 290-310 (IFIF…IVKL).

This sequence belongs to the UbiA prenyltransferase family. Protoheme IX farnesyltransferase subfamily. Interacts with CtaA.

It is found in the cell membrane. It carries out the reaction heme b + (2E,6E)-farnesyl diphosphate + H2O = Fe(II)-heme o + diphosphate. It functions in the pathway porphyrin-containing compound metabolism; heme O biosynthesis; heme O from protoheme: step 1/1. Its function is as follows. Converts heme B (protoheme IX) to heme O by substitution of the vinyl group on carbon 2 of heme B porphyrin ring with a hydroxyethyl farnesyl side group. The polypeptide is Protoheme IX farnesyltransferase (Oceanobacillus iheyensis (strain DSM 14371 / CIP 107618 / JCM 11309 / KCTC 3954 / HTE831)).